The following is a 343-amino-acid chain: Phosphate acyltransferase (343 aa).

Belongs to the PlsX family. In terms of assembly, homodimer. Probably interacts with PlsY.

It localises to the cytoplasm. The enzyme catalyses a fatty acyl-[ACP] + phosphate = an acyl phosphate + holo-[ACP]. Its pathway is lipid metabolism; phospholipid metabolism. Catalyzes the reversible formation of acyl-phosphate (acyl-PO(4)) from acyl-[acyl-carrier-protein] (acyl-ACP). This enzyme utilizes acyl-ACP as fatty acyl donor, but not acyl-CoA. This chain is Phosphate acyltransferase, found in Haemophilus ducreyi (strain 35000HP / ATCC 700724).